An 882-amino-acid chain; its full sequence is Holliday junction resolvase MOC1, chloroplastic (882 aa).

2 disordered regions span residues 87-148 (IRDG…QTPT) and 323-351 (TPAA…PRAA). Over residues 91–111 (PNSNSRCSTVRTHATRSKSTG) the composition is skewed to polar residues. Over residues 112–125 (PSRATSSGPATAAP) the composition is skewed to low complexity. Residues 134 to 148 (NDTQDGGLTSEQTPT) show a composition bias toward polar residues. Residues 323 to 337 (TPAAASQTPPTTVTS) are compositionally biased toward low complexity. Mg(2+) contacts are provided by Asp397, Glu552, Asn629, and Asp634. A disordered region spans residues 710–882 (KVERKAQARS…DGGVSGSESE (173 aa)). Acidic residues predominate over residues 732-743 (EEPEAQAEEEQA). Composition is skewed to low complexity over residues 744–758 (EAGT…GAAA), 769–783 (VESG…VAAG), 810–819 (SGKSSSKAEA), and 830–844 (ASVG…SVGS). Gly residues-rich tracts occupy residues 845-857 (SSGG…GGVK) and 868-882 (AKAG…SESE).

Mg(2+) serves as cofactor. Requires Mn(2+) as cofactor.

It is found in the plastid. Its subcellular location is the chloroplast. It carries out the reaction Endonucleolytic cleavage at a junction such as a reciprocal single-stranded crossover between two homologous DNA duplexes (Holliday junction).. Functionally, a structure-specific endonuclease that resolves Holliday junction (HJ) intermediates during genetic recombination. Cleaves 4-way DNA junctions introducing paired nicks in opposing strands, leaving a 5'-terminal phosphate and a 3'-terminal hydroxyl group that are ligated to produce recombinant products. Mediates chloroplast nucleoid segregation during chloroplast division. This Chlamydomonas reinhardtii (Chlamydomonas smithii) protein is Holliday junction resolvase MOC1, chloroplastic.